Reading from the N-terminus, the 467-residue chain is 6-phospho-beta-galactosidase (467 aa).

The D-galactose 6-phosphate site is built by Gln19, His116, Asn159, Glu160, and Asn297. Glu160 (proton donor) is an active-site residue. Residue Glu375 is the Nucleophile of the active site. D-galactose 6-phosphate is bound by residues Ser428, Trp429, Lys435, and Tyr437.

It belongs to the glycosyl hydrolase 1 family.

The enzyme catalyses a 6-phospho-beta-D-galactoside + H2O = D-galactose 6-phosphate + an alcohol. It functions in the pathway carbohydrate metabolism; lactose degradation; D-galactose 6-phosphate and beta-D-glucose from lactose 6-phosphate: step 1/1. With respect to regulation, inhibited by both galactose-6-phosphate and ATP. This chain is 6-phospho-beta-galactosidase, found in Leptotrichia buccalis (strain ATCC 14201 / DSM 1135 / JCM 12969 / NCTC 10249 / C-1013-b).